The chain runs to 197 residues: Imidazoleglycerol-phosphate dehydratase (197 aa).

This sequence belongs to the imidazoleglycerol-phosphate dehydratase family.

The protein resides in the cytoplasm. It catalyses the reaction D-erythro-1-(imidazol-4-yl)glycerol 3-phosphate = 3-(imidazol-4-yl)-2-oxopropyl phosphate + H2O. It participates in amino-acid biosynthesis; L-histidine biosynthesis; L-histidine from 5-phospho-alpha-D-ribose 1-diphosphate: step 6/9. This Cellvibrio japonicus (strain Ueda107) (Pseudomonas fluorescens subsp. cellulosa) protein is Imidazoleglycerol-phosphate dehydratase.